Consider the following 363-residue polypeptide: MTHQYPALTAEQKKELQDIAQRIVAPGKGILAADESTGSMAKRLNPIGVENTEENRRLYRQLLFSADERIDKCIGGVIFFHETLYQNTDDGTNFAQLIKDRGIVVGIKVDKGVVPLAGTNGETTTQGLDGLSERCAQYKKDGADFAKWRSVLKISDTTPSELAIMENANVLARYASICQQNGIVPIVEPEILPDGEHDLKRCQYVTEKVLAACYKALSDHHVYLEGTLLKPNMVTAGHSCPTKYSSEEIAMATVTALRRTVPPAVSGVTFLSGGQSEEEASVNLNSINNCPLAKPWPLTFSYGRALQASALSAWRGAKSNEKAATEEFIKRAEANGLAAQGKYVSSGTCGAAGQSLYVANHAY.

The substrate site is built by arginine 56 and lysine 147. The Proton acceptor role is filled by glutamate 188. Lysine 230 serves as the catalytic Schiff-base intermediate with dihydroxyacetone-P.

It belongs to the class I fructose-bisphosphate aldolase family. As to quaternary structure, homotetramer.

It carries out the reaction beta-D-fructose 1,6-bisphosphate = D-glyceraldehyde 3-phosphate + dihydroxyacetone phosphate. The protein operates within carbohydrate degradation; glycolysis; D-glyceraldehyde 3-phosphate and glycerone phosphate from D-glucose: step 4/4. This is Fructose-bisphosphate aldolase C-B (aldocb) from Danio rerio (Zebrafish).